The following is a 350-amino-acid chain: LysM domain-containing GPI-anchored protein 2 (350 aa).

The signal sequence occupies residues 1 to 23 (METSCFTLLGLLVSLSFFLTLSA). N30, N48, N76, and N99 each carry an N-linked (GlcNAc...) asparagine glycan. 4 disulfides stabilise this stretch: C31-C97, C38-C161, C95-C159, and C97-C161. LysM domains lie at 108–155 (IEYT…KFWI) and 172–216 (YAHV…PLDV). Residues 114–120 (KDDILSF) and 142–149 (PDPNKIEI) contribute to the chitin site. N193, N238, N258, N289, and N305 each carry an N-linked (GlcNAc...) asparagine glycan. Disulfide bonds link C221–C253 and C248–C277. D318 carries GPI-anchor amidated aspartate lipidation. The propeptide at 319 to 350 (SAGPDNYASTLSSSFNFVIVLIQCALLCLCLL) is removed in mature form.

Forms homooligomers. Interacts with CERK1. Binds to chitin oligosaccharide elicitor.

The protein resides in the cell membrane. Functionally, chitin elicitor-binding protein involved in the perception of chitin oligosaccharide elicitor. The protein is LysM domain-containing GPI-anchored protein 2 (LYM2) of Arabidopsis thaliana (Mouse-ear cress).